The primary structure comprises 254 residues: tRNA (guanine-N(1)-)-methyltransferase (254 aa).

Residues Gly112 and 131–136 contribute to the S-adenosyl-L-methionine site; that span reads IGDYIL.

It belongs to the RNA methyltransferase TrmD family. Homodimer.

The protein localises to the cytoplasm. The enzyme catalyses guanosine(37) in tRNA + S-adenosyl-L-methionine = N(1)-methylguanosine(37) in tRNA + S-adenosyl-L-homocysteine + H(+). In terms of biological role, specifically methylates guanosine-37 in various tRNAs. The chain is tRNA (guanine-N(1)-)-methyltransferase from Sulfurihydrogenibium sp. (strain YO3AOP1).